Reading from the N-terminus, the 332-residue chain is Eukaryotic translation initiation factor 3 subunit I (332 aa).

WD repeat units follow at residues 8-47 (GHER…GTYH), 48-87 (GHQG…LLHT), 144-182 (DESK…LLSS), and 279-318 (GHFG…FDFM).

It belongs to the eIF-3 subunit I family. Component of the eukaryotic translation initiation factor 3 (eIF-3) complex.

The protein resides in the cytoplasm. Functionally, component of the eukaryotic translation initiation factor 3 (eIF-3) complex, which is involved in protein synthesis of a specialized repertoire of mRNAs and, together with other initiation factors, stimulates binding of mRNA and methionyl-tRNAi to the 40S ribosome. The eIF-3 complex specifically targets and initiates translation of a subset of mRNAs involved in cell proliferation. In Phaeosphaeria nodorum (strain SN15 / ATCC MYA-4574 / FGSC 10173) (Glume blotch fungus), this protein is Eukaryotic translation initiation factor 3 subunit I.